Reading from the N-terminus, the 246-residue chain is Sulfate transporter CysZ (246 aa).

The next 4 helical transmembrane spans lie at 24 to 44, 69 to 89, 148 to 168, and 214 to 234; these read LFVL…IGFA, IVWP…FTMV, LLVL…WILF, and LLIP…ATLF.

This sequence belongs to the CysZ family.

Its subcellular location is the cell inner membrane. In terms of biological role, high affinity, high specificity proton-dependent sulfate transporter, which mediates sulfate uptake. Provides the sulfur source for the cysteine synthesis pathway. The chain is Sulfate transporter CysZ from Pseudomonas aeruginosa (strain ATCC 15692 / DSM 22644 / CIP 104116 / JCM 14847 / LMG 12228 / 1C / PRS 101 / PAO1).